The chain runs to 172 residues: MANPRVFFDMTVGGAPAGRIVMELYANEVPKTAENFRALCTGEKGVGKSGKPLHYKGSTFHRVIPEFMCQGGDFTRGNGTGGESIYGEKFPDEKFVRKQPAPGVLSMANAGPNTNGSQFFICTVATPWLDGKHVVFGQVVEGMDVVKAIEKVGTRNGSTSKVVKVADCGQLS.

The region spanning 7-170 (FFDMTVGGAP…KVVKVADCGQ (164 aa)) is the PPIase cyclophilin-type domain.

The protein belongs to the cyclophilin-type PPIase family.

It is found in the cytoplasm. The catalysed reaction is [protein]-peptidylproline (omega=180) = [protein]-peptidylproline (omega=0). Its activity is regulated as follows. Binds cyclosporin A (CsA). CsA mediates some of its effects via an inhibitory action on PPIase. Its function is as follows. PPIases accelerate the folding of proteins. It catalyzes the cis-trans isomerization of proline imidic peptide bonds in oligopeptides. This chain is Peptidyl-prolyl cis-trans isomerase (CYP), found in Zea mays (Maize).